The primary structure comprises 124 residues: Fluoride-specific ion channel FluC (124 aa).

4 helical membrane-spanning segments follow: residues 3–23, 34–54, 68–88, and 100–120; these read VLLI…VSNL, IGTL…FIFI, LLLI…IETF, and ALNV…GVLI. Na(+) contacts are provided by Gly75 and Thr78.

Belongs to the fluoride channel Fluc/FEX (TC 1.A.43) family.

It localises to the cell inner membrane. It carries out the reaction fluoride(in) = fluoride(out). Its activity is regulated as follows. Na(+) is not transported, but it plays an essential structural role and its presence is essential for fluoride channel function. Its function is as follows. Fluoride-specific ion channel. Important for reducing fluoride concentration in the cell, thus reducing its toxicity. This Coxiella burnetii (strain CbuK_Q154) (Coxiella burnetii (strain Q154)) protein is Fluoride-specific ion channel FluC.